Reading from the N-terminus, the 986-residue chain is Ankyrin repeat, PH and SEC7 domain containing protein secG (986 aa).

The segment covering 1-28 has biased composition (low complexity); the sequence is MGSTSNSTKNTGSTTTTTTTAAPATTAK. The segment at 1–43 is disordered; it reads MGSTSNSTKNTGSTTTTTTTAAPATTAKHSNSAPTRPSVHYYS. The segment covering 29-43 has biased composition (polar residues); it reads HSNSAPTRPSVHYYS. ANK repeat units follow at residues 34 to 63, 68 to 97, 101 to 131, 135 to 164, 168 to 197, 201 to 230, 234 to 263, 267 to 296, 300 to 329, 334 to 363, 367 to 396, 400 to 429, 433 to 462, 466 to 495, and 499 to 528; these read PTRPSVHYYSSTGDIEKLSNLLNNSATSPD, EKRTPLHHAAFCGSAACVNFLLDKKANANI, AGNTPLQWASSRGHLECIKLLVEKGGVDVNT, KNGTPLHKASLFASAECVLYLLNGKADPRA, NGETPLHHASAGGNPQCVELLIKADSKVNA, DCITPLHQASFSGHSSCVSLLLKKGAKVDP, HGISPLHNAASAGYVDCVEQLVRNGENINC, EGVTPLHHTCFNGNLQLTKRLIELGAKINM, MGETPLHKAAFNGHKEVCEYLLYLDPTMID, RQSTSLHLAAFNGLLDMVDLLIRYKAQINI, EGATPLHKASFNGHSSCAKLLVDKGAPICI, QGATPLHKAAFNGRSKCLATLIRSGAELEV, QGGTPLHNAAYNGHSDCCRILLKKGANVNA, HSSTPLHLASAAGARDTVDVLIQFKARIDA, and AGKTPLVYAIKKNHSDVARVLIRAGADLDQ. One can recognise an SEC7 domain in the interval 580–770; sequence QLAAEKQKLL…ENLYDKIVTN (191 aa). Residues 784–895 form the PH domain; the sequence is HVEKKGWLTK…WVQSIKSNIH (112 aa). A disordered region spans residues 911–986; that stretch reads IRGRGKVSTK…PVQQQTSALS (76 aa). Residues 920-929 are compositionally biased toward polar residues; sequence KPIQNRKQTI. Composition is skewed to low complexity over residues 936–953 and 963–986; these read TTTTTTSTASNNVTSVGS and SSGSKPVTFSSTSSPVQQQTSALS.

The polypeptide is Ankyrin repeat, PH and SEC7 domain containing protein secG (secG) (Dictyostelium discoideum (Social amoeba)).